A 493-amino-acid chain; its full sequence is MTDLTRLTIAEARAKLSAKEITAVELTDAYIGAIEAANETINAYVTVTPEKARAMAKASDARIAAGKAGALEGIPLGIKDLFGTEGVHTQACSHILDGFRPRYESTVTQNLWNDGAVMLGKLNMDEFAMGSSNETSYYGPVKNPWRAKGSNMDLVPGGSSGGSAAAVAAYLCAGATATDTGGSIRQPAAFTGTVGIKPTYGRCSRWGVVAFASSLDQAGPIARDVRDAAILLKSMASVDLKDTTSVDLPVPDYEASIGQSIKGMKIGIPKEYRVDGMPEEIEALWQQGIAWLKEAGAEIVDITLPHTKYALPAYYIVAPAEASSNLARYDGVRYGLRVDGKDIVDMYEKTRAAGFGREVKRRIMIGTYVLSAGYYDAYYLRAQKVRSLIKRDFELAFQAGVDAILTPATPSSAFGIADEDLASDPVKMYLNDIFTVTVNMAGLPGIAVPGGLDHKGLPLGLQLIGKPFDEETLFKTAHVIEQAAGRFAPSKWW.

Residues K79 and S159 each act as charge relay system in the active site. The active-site Acyl-ester intermediate is the S183.

The protein belongs to the amidase family. GatA subfamily. Heterotrimer of A, B and C subunits.

The catalysed reaction is L-glutamyl-tRNA(Gln) + L-glutamine + ATP + H2O = L-glutaminyl-tRNA(Gln) + L-glutamate + ADP + phosphate + H(+). Functionally, allows the formation of correctly charged Gln-tRNA(Gln) through the transamidation of misacylated Glu-tRNA(Gln) in organisms which lack glutaminyl-tRNA synthetase. The reaction takes place in the presence of glutamine and ATP through an activated gamma-phospho-Glu-tRNA(Gln). This Sinorhizobium fredii (strain NBRC 101917 / NGR234) protein is Glutamyl-tRNA(Gln) amidotransferase subunit A.